Here is a 358-residue protein sequence, read N- to C-terminus: Neutral protease 2 homolog PABG_02362 (358 aa).

An N-terminal signal peptide occupies residues 1–19 (MRRVSGILAVAAFTISAFA). Residues 20-182 (GVIQPVAKDA…FAAMNQFVKI (163 aa)) constitute a propeptide that is removed on maturation. Intrachain disulfides connect Cys-188–Cys-259 and Cys-266–Cys-284. The N-linked (GlcNAc...) asparagine glycan is linked to Asn-249. His-309 provides a ligand contact to Zn(2+). The active site involves Glu-310. Residues His-313 and Asp-324 each contribute to the Zn(2+) site.

The protein belongs to the peptidase M35 family. Requires Zn(2+) as cofactor.

The protein resides in the secreted. It catalyses the reaction Preferential cleavage of bonds with hydrophobic residues in P1'. Also 3-Asn-|-Gln-4 and 8-Gly-|-Ser-9 bonds in insulin B chain.. Functionally, secreted metalloproteinase that allows assimilation of proteinaceous substrates. Shows high activities on basic nuclear substrates such as histone and protamine. The polypeptide is Neutral protease 2 homolog PABG_02362 (Paracoccidioides brasiliensis (strain Pb03)).